A 329-amino-acid chain; its full sequence is tRNA pseudouridine synthase B (329 aa).

Substrate is bound at residue H43. The active-site Nucleophile is the D48. Substrate-binding residues include Y76, Y179, and L200.

This sequence belongs to the pseudouridine synthase TruB family. Type 1 subfamily.

The enzyme catalyses uridine(55) in tRNA = pseudouridine(55) in tRNA. Responsible for synthesis of pseudouridine from uracil-55 in the psi GC loop of transfer RNAs. In Yersinia enterocolitica serotype O:8 / biotype 1B (strain NCTC 13174 / 8081), this protein is tRNA pseudouridine synthase B.